A 428-amino-acid polypeptide reads, in one-letter code: MKNIVFCGLSSRAFSMFIKPLMERFSTHYEITGLLDADPKRFAVCKKKFPELAHVPEFSEDAFDEMMRVSKPDIVIVAGRDDTHVAYIVKSLQWNTDVITEKPMVTTVQDANRVLEAEAKSEGKVTVAFNYRYSPFHRKIKEMILDGKIGRVTSVDLNWYIDTYHGASYFKRWNRSRQFSGGLSVHKSTHHFDLVNWWLGQNPEEVFAYGALNYYGPDSEWNPLPEEDGRFCGTCRVKEKCHYYSRWHPRSSKASIKDDHLEAGDQSSLYTAYRPDACIFDEEIDIEDTYVAAVKYDGGALLSYSIIFSAPYEGYRLTINGTKGRIESNEFHEPSRIPFAFPEQTIEYYPLFESKQTIQVVKNEGGHGGGDPLLLEDLFLGKDPLRRYDILAGAEAGAYSIAVGEGMWRSVAEKKPIGMKELFQMQNV.

An N-terminal signal peptide occupies residues 1–23 (MKNIVFCGLSSRAFSMFIKPLME).

Belongs to the Gfo/Idh/MocA family.

May play a role in the degradation of type I rhamnogalacturonan derived from plant cell walls. The sequence is that of Putative oxidoreductase YteT (yteT) from Bacillus subtilis (strain 168).